A 2313-amino-acid polypeptide reads, in one-letter code: Cell surface glycoprotein 1 (2313 aa).

The signal sequence occupies residues 1–28; that stretch reads MKRKNKVLSILLTLLLIISTTSVNMSFA. Cohesin domains are found at residues 34–197 and 205–367; these read IEMV…VVEA and VALE…EIVV. The segment covering 369 to 378 has biased composition (acidic residues); that stretch reads GEEPGEEPTE. A disordered region spans residues 369 to 400; sequence GEEPGEEPTEEPVPTETSVDPTPTVTEEPVPS. Residues 380 to 400 show a composition bias toward low complexity; it reads PVPTETSVDPTPTVTEEPVPS. The 163-residue stretch at 407 to 569 folds into the Cohesin 3 domain; that stretch reads VIMELDKTKV…SVVQPGEIVV (163 aa). Residues 571-580 are compositionally biased toward acidic residues; it reads GEEPGEEPTE. Positions 571 to 602 are disordered; that stretch reads GEEPGEEPTEEPVPTETSVDPTPTVTEEPVPS. A compositionally biased stretch (low complexity) spans 582 to 602; the sequence is PVPTETSVDPTPTVTEEPVPS. The region spanning 609-771 is the Cohesin 4 domain; it reads VIMELDKTKV…SVVQPGEIVA (163 aa). Acidic residues predominate over residues 772 to 782; the sequence is EGEEPGEEPTE. The interval 772 to 805 is disordered; it reads EGEEPGEEPTEEPVPTETSADPTPTVTEEPVPSE. The segment covering 784–803 has biased composition (low complexity); that stretch reads PVPTETSADPTPTVTEEPVP. In terms of domain architecture, Cohesin 5 spans 811–973; that stretch reads VIMELDKTKV…SVVQPGEIVA (163 aa). Residues 974–984 are compositionally biased toward acidic residues; that stretch reads EGEEPGEEPTE. The segment at 974–1007 is disordered; that stretch reads EGEEPGEEPTEEPVPTETPVDPTPTVTEEPVPSE. Residues 986–1007 show a composition bias toward low complexity; the sequence is PVPTETPVDPTPTVTEEPVPSE. The region spanning 1013 to 1175 is the Cohesin 6 domain; the sequence is VIMELDKTKV…SVVQPGEIVA (163 aa). Disordered stretches follow at residues 1177–1203 and 1374–2111; these read GEEP…EPVP and ASDE…PDGS. Residues 1184–1203 are compositionally biased toward low complexity; sequence PVPTETPVDPTPTVTEEPVP. A Cohesin 7 domain is found at 1211–1375; sequence VIMELDKTKV…IQPAPIKAAS (165 aa). A compositionally biased stretch (low complexity) spans 1376–1390; sequence DEPIPTDTPSDEPTP. Residues 1383 to 2025 are approximate tandem repeats of T-P-S-D-E-P; the sequence is TPSDEPTPSD…SDEPTPSETP (643 aa). The segment covering 1391–1411 has biased composition (pro residues); sequence SDEPTPSDEPTPSDEPTPSDE. Positions 1423–1433 are enriched in low complexity; it reads PTDTPSDEPTP. Residues 1434–1454 are compositionally biased toward pro residues; that stretch reads SDEPTPSDEPTPSDEPTPSDE. Positions 1466 to 1476 are enriched in low complexity; that stretch reads PTDTPSDEPTP. Over residues 1477-1497 the composition is skewed to pro residues; sequence SDEPTPSDEPTPSDEPTPSDE. A compositionally biased stretch (low complexity) spans 1509–1519; that stretch reads PTDTPSDEPTP. Residues 1520 to 1540 show a composition bias toward pro residues; sequence SDEPTPSDEPTPSDEPTPSDE. Residues 1552 to 1562 show a composition bias toward low complexity; the sequence is PTDTPSDEPTP. Residues 1563-1595 are compositionally biased toward pro residues; sequence SDEPTPSDEPTPSDEPTPSDEPTPSDEPTPSDE. Low complexity predominate over residues 1607-1617; it reads PTDTPSDEPTP. The segment covering 1618 to 1650 has biased composition (pro residues); it reads SDEPTPSDEPTPSDEPTPSDEPTPSDEPTPSDE. A compositionally biased stretch (low complexity) spans 1662–1672; it reads PTDTPSDEPTP. The segment covering 1673-1693 has biased composition (pro residues); that stretch reads SDEPTPSDEPTPSDEPTPSDE. Residues 1705–1715 show a composition bias toward low complexity; that stretch reads PTDTPSDEPTP. Positions 1716 to 1736 are enriched in pro residues; sequence SDEPTPSDEPTPSDEPTPSDE. Over residues 1748–1758 the composition is skewed to low complexity; that stretch reads PTDTPSDEPTP. The segment covering 1759–1779 has biased composition (pro residues); sequence SDEPTPSDEPTPSDEPTPSDE. A compositionally biased stretch (low complexity) spans 1791–1801; it reads PTDTPSDEPTP. Residues 1802 to 1822 show a composition bias toward pro residues; sequence SDEPTPSDEPTPSDEPTPSDE. Over residues 1834–1844 the composition is skewed to low complexity; it reads PTDTPSDEPTP. Over residues 1845 to 1865 the composition is skewed to pro residues; sequence SDEPTPSDEPTPSDEPTPSDE. Over residues 1877–1887 the composition is skewed to low complexity; that stretch reads PTDTPSDEPTP. The segment covering 1888-1908 has biased composition (pro residues); the sequence is SDEPTPSDEPTPSDEPTPSDE. The span at 1920-1930 shows a compositional bias: low complexity; it reads PTDTPSDEPTP. The span at 1931–1963 shows a compositional bias: pro residues; that stretch reads SDEPTPSDEPTPSDEPTPSDEPTPSDEPTPSDE. Positions 1975-1985 are enriched in low complexity; that stretch reads PTDTPSDEPTP. 2 stretches are compositionally biased toward pro residues: residues 1986–2018 and 2027–2039; these read SDEP…PSDE and EPTP…PTPS. Gly residues predominate over residues 2045–2062; the sequence is GSGGSGGSGGGGGGGGGT. SLH domains lie at 2067–2140, 2141–2204, and 2211–2274; these read PTPT…YGAQ, SASP…EIMS, and ISNP…GAPK. Over residues 2073-2082 the composition is skewed to low complexity; the sequence is SKPTSTPAPT.

As to quaternary structure, assembled into mono-layered crystalline arrays.

Its subcellular location is the secreted. It is found in the cell wall. It localises to the S-layer. This is Cell surface glycoprotein 1 (olpB) from Acetivibrio thermocellus (strain ATCC 27405 / DSM 1237 / JCM 9322 / NBRC 103400 / NCIMB 10682 / NRRL B-4536 / VPI 7372) (Clostridium thermocellum).